Reading from the N-terminus, the 413-residue chain is MDEEHIALYPFASEVSAYVESLRVSLESLLNSPAFRRSRVRGMERVMQSIEGEIETTLIKDESWLLSETLSYPFAQILVACVDDQLFTKRYALKEAEAASKWLEKESTDFLLEFGEDFGIQAEAEELQFSMHFADYIRFSSSIREPVWKLTNRQLRSGMVVVTKKDFVRLLQEAIKERIEKSFPIPKIPSEVSSFCAPYVAEIKDKFEVHKKKFGTTDFGVVEPDLFPPCISHALANVQGGVNLAHSMRFAMTSFLLSVGMSVDEILNLFNVSPDFDAEVTLYQIEHIAGATGNVYKPPACDTMRTYGNCIGKDRLCEKINHPLAYYEKKIYLKNKEKEMEKEKEEKEEKEKQEEKKEEEEKEKQEEIKKKKKKEKQEEKGKKIKEGKKRERKQEKETKRREGKEKQEEKKRI.

[4Fe-4S] cluster contacts are provided by Cys230, Cys301, Cys310, and Cys317. Composition is skewed to basic and acidic residues over residues 340 to 356 (MEKE…QEEK), 362 to 381 (KEKQ…EEKG), and 388 to 413 (KKRE…KKRI). The disordered stretch occupies residues 340–413 (MEKEKEEKEE…KEKQEEKKRI (74 aa)).

Belongs to the eukaryotic-type primase large subunit family. As to quaternary structure, heterodimer of a small subunit (PriS) and a large subunit (PriL). It depends on [4Fe-4S] cluster as a cofactor.

Functionally, regulatory subunit of DNA primase, an RNA polymerase that catalyzes the synthesis of short RNA molecules used as primers for DNA polymerase during DNA replication. Stabilizes and modulates the activity of the small subunit, increasing the rate of DNA synthesis, and conferring RNA synthesis capability. The DNA polymerase activity may enable DNA primase to also catalyze primer extension after primer synthesis. May also play a role in DNA repair. The protein is DNA primase large subunit PriL of Methanosarcina barkeri (strain Fusaro / DSM 804).